The following is a 371-amino-acid chain: Probable beta-1,4-xylosyltransferase GT43A (371 aa).

Over 1-19 (MGTAAVAAAERPKQRRSSH) the chain is Cytoplasmic. Residues 20–42 (LWKKALLHFSLCFVMGFFTGFAP) traverse the membrane as a helical; Signal-anchor for type II membrane protein segment. The Lumenal portion of the chain corresponds to 43 to 371 (SSSSSWRAGS…TSTPKTHNRR (329 aa)). N-linked (GlcNAc...) asparagine glycosylation is found at Asn-176 and Asn-299.

It belongs to the glycosyltransferase 43 family.

The protein resides in the golgi apparatus membrane. Functionally, probable beta-1,4-xylosyltransferase involved in xylan biosynthesis in cell walls. In Oryza sativa subsp. japonica (Rice), this protein is Probable beta-1,4-xylosyltransferase GT43A.